We begin with the raw amino-acid sequence, 223 residues long: 2-C-methyl-D-erythritol 4-phosphate cytidylyltransferase (223 aa).

It belongs to the IspD/TarI cytidylyltransferase family. IspD subfamily.

It catalyses the reaction 2-C-methyl-D-erythritol 4-phosphate + CTP + H(+) = 4-CDP-2-C-methyl-D-erythritol + diphosphate. It functions in the pathway isoprenoid biosynthesis; isopentenyl diphosphate biosynthesis via DXP pathway; isopentenyl diphosphate from 1-deoxy-D-xylulose 5-phosphate: step 2/6. Catalyzes the formation of 4-diphosphocytidyl-2-C-methyl-D-erythritol from CTP and 2-C-methyl-D-erythritol 4-phosphate (MEP). This is 2-C-methyl-D-erythritol 4-phosphate cytidylyltransferase from Prochlorococcus marinus (strain AS9601).